We begin with the raw amino-acid sequence, 170 residues long: Bacilliredoxin SRU_1493 (170 aa).

Residues 140-170 (CGDEEPPADAPSRPDPSSSGEGLPSTFQSIT) are disordered.

It belongs to the bacilliredoxin family.

The sequence is that of Bacilliredoxin SRU_1493 from Salinibacter ruber (strain DSM 13855 / M31).